A 1081-amino-acid polypeptide reads, in one-letter code: Psi-producing oxygenase A (1081 aa).

Residues 105–446 (TKSFLNMLWN…DGAFNDDDLV (342 aa)) form a linoleate 8R-lipoxygenase region. Heme b is bound at residue His-202. The active site involves Tyr-374. His-377 serves as a coordination point for heme b. Positions 654–1081 (IFISSHAACM…GELPQLKEDF (428 aa)) are 9,12-octadecadienoate 8-hydroperoxide 8R-isomerase.

The protein belongs to the peroxidase family. As to quaternary structure, homotetramer. Heme b serves as cofactor.

The enzyme catalyses (9Z,12Z)-octadecadienoate + O2 = (8R,9Z,12Z)-8-hydroperoxyoctadeca-9,12-dienoate. It carries out the reaction (8R,9Z,12Z)-8-hydroperoxyoctadeca-9,12-dienoate = (5S,8R,9Z,12Z)-5,8-dihydroxyoctadeca-9,12-dienoate. Its function is as follows. Bifunctional heme-containing enzyme that oxidizes linoleic acid to (8R,9Z,12Z)-8-hydroperoxyoctadeca-9,12-dienoate (within the N-terminal heme peroxidase domain), which is subsequently isomerized to (5S,8R,9Z,12Z)-5,8-dihydroxyoctadeca-9,12-dienoate (within the C-terminal P450 heme thiolate domain). Oxidized unsaturated fatty acids, so-called oxylipins, derived from endogenous fatty acids, influence the development of the asexual conidiophores and sexual cleistothecia and regulate the secondary metabolism. These substances were collectively named psi factors and are primarily a mixture of hydroxylated oleic, linoleic and alpha-linolenic acids. They are termed psi-beta, psi-alpha, and psi-gamma, respectively. The sequence is that of Psi-producing oxygenase A (ppoA) from Emericella nidulans (Aspergillus nidulans).